The sequence spans 163 residues: Nodulin-13 (163 aa).

The kinetin site is built by glutamine 68 and tyrosine 82. N(6)-dimethylallyladenine-binding residues include glutamine 68 and tyrosine 82. 3 residues coordinate trans-zeatin: glutamine 68, tyrosine 82, and tyrosine 133.

The protein belongs to the BetVI family. As to quaternary structure, homodimer. As to expression, expressed in nodules, but not in leaves, stems, flowers and roots. Specifically located in the nodule cortex.

May be involved in nodule organogenesis rather in the processes related to nitrogen fixation or interactions with the bacteria. May regulate nodulation by controlling the levels of freely available cytokinins. The polypeptide is Nodulin-13 (N13) (Medicago truncatula (Barrel medic)).